An 820-amino-acid polypeptide reads, in one-letter code: Trimethylamine-N-oxide reductase (820 aa).

Residues 1-33 (MAITRRSFLKGVATTSAASVIGPSLLASASANA) constitute a signal peptide (tat-type signal). Serine 179 contributes to the Mo-bis(molybdopterin guanine dinucleotide) binding site.

The protein belongs to the prokaryotic molybdopterin-containing oxidoreductase family. Requires Mo-bis(molybdopterin guanine dinucleotide) as cofactor. Post-translationally, predicted to be exported by the Tat system. The position of the signal peptide cleavage has not been experimentally proven.

Its subcellular location is the periplasm. The enzyme catalyses trimethylamine + 2 Fe(III)-[cytochrome c] + H2O = trimethylamine N-oxide + 2 Fe(II)-[cytochrome c] + 3 H(+). Reduces trimethylamine-N-oxide (TMAO) into trimethylamine; an anaerobic reaction coupled to energy-yielding reactions. This Vibrio vulnificus (strain CMCP6) protein is Trimethylamine-N-oxide reductase (torA).